A 347-amino-acid chain; its full sequence is Homeobox protein knotted-1-like 9 (347 aa).

The span at 1–17 (MESFASLAGGGSSSTTA) shows a compositional bias: low complexity. Disordered stretches follow at residues 1–36 (MESF…PPPL), 122–145 (QQLD…DVPD), and 179–206 (DSNC…DPSD). Residues 22-36 (LIPPENPDRISPPPL) show a composition bias toward pro residues. Residues 188–203 (SEEEQDTSCPEAEEID) are compositionally biased toward acidic residues. The ELK domain maps to 208-228 (QLKHQLLMKYGGSLGDLRQAF). A DNA-binding region (homeobox; TALE-type) is located at residues 229–293 (SKRTKKGKLP…NQRKRHWKPT (65 aa)).

Belongs to the TALE/KNOX homeobox family.

The protein resides in the nucleus. The chain is Homeobox protein knotted-1-like 9 from Oryza sativa subsp. japonica (Rice).